Consider the following 137-residue polypeptide: Probable 4-amino-4-deoxy-L-arabinose-phosphoundecaprenol flippase subunit ArnF (137 aa).

3 helical membrane passes run 43–63 (AIAV…FWLL), 74–94 (YSLL…LPFF), and 98–118 (FTVS…TINL).

It belongs to the ArnF family. In terms of assembly, heterodimer of ArnE and ArnF.

It is found in the cell inner membrane. It functions in the pathway bacterial outer membrane biogenesis; lipopolysaccharide biosynthesis. Functionally, translocates 4-amino-4-deoxy-L-arabinose-phosphoundecaprenol (alpha-L-Ara4N-phosphoundecaprenol) from the cytoplasmic to the periplasmic side of the inner membrane. The sequence is that of Probable 4-amino-4-deoxy-L-arabinose-phosphoundecaprenol flippase subunit ArnF from Pseudomonas savastanoi pv. phaseolicola (strain 1448A / Race 6) (Pseudomonas syringae pv. phaseolicola (strain 1448A / Race 6)).